The chain runs to 652 residues: Carboxypeptidase S1 homolog A (652 aa).

A signal peptide spans 1 to 19; sequence MRFAASIAVALPVIHAASA. An intrachain disulfide couples cysteine 50 to cysteine 121. N-linked (GlcNAc...) asparagine glycans are attached at residues asparagine 77, asparagine 132, asparagine 161, asparagine 168, asparagine 184, and asparagine 202. Serine 238 is an active-site residue. Asparagine 260, asparagine 299, asparagine 347, and asparagine 410 each carry an N-linked (GlcNAc...) asparagine glycan. Disulfide bonds link cysteine 325–cysteine 361 and cysteine 332–cysteine 354. Residue aspartate 458 is part of the active site. A substrate-binding site is contributed by cysteine 461. 3 N-linked (GlcNAc...) asparagine glycosylation sites follow: asparagine 474, asparagine 492, and asparagine 505. The active site involves histidine 516. Residue glutamate 517 participates in substrate binding. Residues 608 to 627 are disordered; the sequence is AASKGNPPPTTTSSPTAAPT. Low complexity predominate over residues 618-627; the sequence is TTSSPTAAPT. The GPI-anchor amidated glycine moiety is linked to residue glycine 629. A propeptide spans 630–652 (removed in mature form); sequence SAMLKAPVAMLAISALTVLAFFL.

It belongs to the peptidase S10 family.

The protein resides in the cell membrane. It catalyses the reaction Preferential release of a C-terminal arginine or lysine residue.. Functionally, extracellular serine carboxypeptidase that contributes to pathogenicity. The chain is Carboxypeptidase S1 homolog A (SCPA) from Trichophyton rubrum (Athlete's foot fungus).